The following is a 505-amino-acid chain: Glycerol kinase (505 aa).

Position 14 (Thr14) interacts with ADP. ATP is bound by residues Thr14, Thr15, and Ser16. Thr14 contributes to the sn-glycerol 3-phosphate binding site. Arg18 provides a ligand contact to ADP. Sn-glycerol 3-phosphate contacts are provided by Arg84, Glu85, Tyr136, and Asp246. Arg84, Glu85, Tyr136, Asp246, and Gln247 together coordinate glycerol. 2 residues coordinate ADP: Thr268 and Gly311. ATP is bound by residues Thr268, Gly311, Gln315, and Gly412. ADP-binding residues include Gly412 and Asn416.

The protein belongs to the FGGY kinase family.

It catalyses the reaction glycerol + ATP = sn-glycerol 3-phosphate + ADP + H(+). Its pathway is polyol metabolism; glycerol degradation via glycerol kinase pathway; sn-glycerol 3-phosphate from glycerol: step 1/1. Inhibited by fructose 1,6-bisphosphate (FBP). In terms of biological role, key enzyme in the regulation of glycerol uptake and metabolism. Catalyzes the phosphorylation of glycerol to yield sn-glycerol 3-phosphate. This chain is Glycerol kinase, found in Vibrio campbellii (strain ATCC BAA-1116).